We begin with the raw amino-acid sequence, 50 residues long: Insulin (50 aa).

3 disulfides stabilise this stretch: cysteine 7–cysteine 36, cysteine 19–cysteine 49, and cysteine 35–cysteine 40.

This sequence belongs to the insulin family. Heterodimer of a B chain and an A chain linked by two disulfide bonds.

It localises to the secreted. Insulin decreases blood glucose concentration. It increases cell permeability to monosaccharides, amino acids and fatty acids. It accelerates glycolysis, the pentose phosphate cycle, and glycogen synthesis in liver. The protein is Insulin (INS) of Proechimys guairae (Guaira spiny rat).